A 3388-amino-acid chain; its full sequence is Genome polyprotein (3388 aa).

An interaction with host EXOC1 region spans residues 1–15 (MNDQRKKARNTPFNM). The Cytoplasmic portion of the chain corresponds to 1–101 (MNDQRKKARN…LNILNRRRRT (101 aa)). The interval 37-72 (MLQGRGPLKLFMALVAFLRFLTIPPTAGILKRWGTI) is hydrophobic; homodimerization of capsid protein C. Positions 101–114 (TAGMIIMLIPTVMA) are cleaved as a propeptide — ER anchor for the capsid protein C, removed in mature form by serine protease NS3. Residues 102 to 122 (AGMIIMLIPTVMAFHLTTRNG) traverse the membrane as a helical segment. Residues 123 to 238 (EPHMIVSRQE…GAWKHAQRIE (116 aa)) lie on the Extracellular side of the membrane. A glycan (N-linked (GlcNAc...) asparagine; by host) is linked at asparagine 183. Residues 239 to 259 (TWILRHPGFTIMAAILAYTIG) traverse the membrane as a helical segment. The Cytoplasmic portion of the chain corresponds to 260–265 (TTHFQR). The chain crosses the membrane as a helical span at residues 266–280 (VLIFILLTAIAPSMT). Residues 281-725 (MRCIGISNRD…LHQVFGAIYG (445 aa)) lie on the Extracellular side of the membrane. 4 disulfide bridges follow: cysteine 283/cysteine 310, cysteine 340/cysteine 401, cysteine 354/cysteine 385, and cysteine 372/cysteine 396. Asparagine 347 carries an N-linked (GlcNAc...) asparagine; by host glycan. The fusion peptide stretch occupies residues 378 to 391 (DRGWGNGCGLFGKG). N-linked (GlcNAc...) asparagine; by host glycosylation occurs at asparagine 433. 2 cysteine pairs are disulfide-bonded: cysteine 465-cysteine 565 and cysteine 582-cysteine 613. Residues 726-746 (AAFSGVSWTMKILIGVIITWI) form a helical membrane-spanning segment. Topologically, residues 747–752 (GMNSRS) are cytoplasmic. The helical transmembrane segment at 753–773 (TSLSVSLVLVGIVTLYLGVMV) threads the bilayer. Residues 774 to 1195 (QADSGCVVSW…MVGATMTDDI (422 aa)) lie on the Extracellular side of the membrane. Intrachain disulfides connect cysteine 779–cysteine 790, cysteine 830–cysteine 918, cysteine 954–cysteine 998, cysteine 1055–cysteine 1104, cysteine 1066–cysteine 1088, and cysteine 1087–cysteine 1091. Residues asparagine 905 and asparagine 982 are each glycosylated (N-linked (GlcNAc...) asparagine; by host). Asparagine 1134 is a glycosylation site (N-linked (GlcNAc...) asparagine; by host). Residues 1196 to 1220 (GMGVTYLALLAAFKVRPTFAAGLLL) form a helical membrane-spanning segment. The Cytoplasmic segment spans residues 1221 to 1226 (RKLTSK). Residues 1227–1245 (ELMMTTIGIVLLSQSSIPE) traverse the membrane as a helical segment. Residues 1246–1269 (TILELTDALALGMMVLKMVRNMEK) are Lumenal-facing. A helical membrane pass occupies residues 1270–1290 (YQLAVTIMAILCVPNAVILQN). Alanine 1291 is a topological domain (cytoplasmic). A helical transmembrane segment spans residues 1292–1310 (WKVSCTILAVVSVSPLFLT). Residues 1311–1317 (SSQQKAD) are Lumenal-facing. Residues 1318–1338 (WIPLALTIKGLNPTAIFLTTL) traverse the membrane as a helical segment. The Cytoplasmic segment spans residues 1339–1346 (SRTSKKRS). Residues 1347 to 1367 (WPLNEAIMAVGMVSILASSLL) form a helical membrane-spanning segment. The Lumenal portion of the chain corresponds to 1368–1370 (KND). A helical transmembrane segment spans residues 1371–1391 (TPMTGPLVAGGLLTVCYVLTG). Topologically, residues 1392 to 1447 (RSADLELERATDVKWDDQAEISGSSPILSITISEDGSMSIKNEEEEQTLTILIRTG) are cytoplasmic. An interacts with and activates NS3 protease region spans residues 1398 to 1437 (LERATDVKWDDQAEISGSSPILSITISEDGSMSIKNEEEE). Positions 1448 to 1468 (LLVISGLFPVSIPITAAAWYL) form an intramembrane region, helical. At 1469 to 2144 (WEVKKQRAGV…LSELPETLET (676 aa)) the chain is on the cytoplasmic side. Residues 1476–1653 (AGVLWDVPSP…EKSIEDNPEI (178 aa)) form the Peptidase S7 domain. Active-site charge relay system; for serine protease NS3 activity residues include histidine 1526, aspartate 1550, and serine 1610. Residues 1655–1811 (DDIFRKRRLT…QSNAPIMDEE (157 aa)) enclose the Helicase ATP-binding domain. The important for RNA-binding stretch occupies residues 1659–1662 (RKRR). 1668-1675 (LHPGAGKT) serves as a coordination point for ATP. The DEAH box motif lies at 1759-1762 (DEAH). Residues 1821-1988 (SGHEWVTDFK…IIPSMFEPER (168 aa)) form the Helicase C-terminal domain. N6-acetyllysine; by host is present on lysine 1863. Residues 2145-2165 (LLLLTLLATVTGGIFLFLMSG) form a helical membrane-spanning segment. The Lumenal portion of the chain corresponds to 2166–2167 (RG). The helical intramembrane region spans 2168 to 2188 (IGKMTLGMCCIITASILLWYA). Residue glutamine 2189 is a topological domain, lumenal. A helical membrane pass occupies residues 2190-2210 (IQPHWIAASIILEFFLIVLLI). Residues 2211–2225 (PEPEKQRTPQDNQLT) are Cytoplasmic-facing. A helical transmembrane segment spans residues 2226–2246 (YVIIAILTVVAATMANEMGFL). The Lumenal segment spans residues 2247 to 2271 (EKTKKDLGLGNIATQQPESNILDID). An intramembrane region (helical) is located at residues 2272–2292 (LRPASAWTLYAVATTFITPML). The Lumenal portion of the chain corresponds to 2293–2313 (RHSIENSSVNVSLTAIANQAT). N-linked (GlcNAc...) asparagine; by host glycans are attached at residues asparagine 2298 and asparagine 2302. The helical intramembrane region spans 2314–2334 (VLMGLGKGWPLSKMDIGVPLL). At 2335-2344 (AIGCYSQVNP) the chain is on the lumenal side. A helical transmembrane segment spans residues 2345-2365 (ITLTAALLLLVAHYAIIGPGL). Over 2366-2410 (QAKATREAQKRAAAGIMKNPTVDGITVIDLDPIPYDPKFEKQLGQ) the chain is Cytoplasmic. The chain crosses the membrane as a helical span at residues 2411–2431 (VMLLVLCVTQVLMMRTTWALC). Residues 2432-2456 (EALTLATGPVSTLWEGNPGRFWNTT) lie on the Lumenal side of the membrane. The N-linked (GlcNAc...) asparagine; by host glycan is linked to asparagine 2454. The helical transmembrane segment at 2457–2477 (IAVSMANIFRGSYLAGAGLLF) threads the bilayer. Residues 2478–3388 (SIMKNTTSTR…REEEEAGVLW (911 aa)) lie on the Cytoplasmic side of the membrane. In terms of domain architecture, mRNA cap 0-1 NS5-type MT spans 2490–2752 (TGNIGETLGE…DVDLGSGTRN (263 aa)). Serine 2544 is a binding site for S-adenosyl-L-methionine. Serine 2544 carries the phosphoserine modification. The active-site For 2'-O-MTase activity is lysine 2549. Residues 2565 to 2568 (VVDL) carry the SUMO-interacting motif motif. S-adenosyl-L-methionine contacts are provided by glycine 2574, tryptophan 2575, threonine 2592, lysine 2593, aspartate 2619, and valine 2620. Residue aspartate 2634 is the For 2'-O-MTase activity of the active site. Residue isoleucine 2635 coordinates S-adenosyl-L-methionine. Residues lysine 2669 and glutamate 2705 each act as for 2'-O-MTase activity in the active site. Tyrosine 2707 provides a ligand contact to S-adenosyl-L-methionine. Zn(2+) is bound by residues glutamate 2926, histidine 2930, cysteine 2935, and cysteine 2938. The 150-residue stretch at 3017-3166 (AMYADDTAGW…PLDDRFARAL (150 aa)) folds into the RdRp catalytic domain. Histidine 3200, cysteine 3216, and cysteine 3335 together coordinate Zn(2+).

The protein in the N-terminal section; belongs to the class I-like SAM-binding methyltransferase superfamily. mRNA cap 0-1 NS5-type methyltransferase family. As to quaternary structure, homodimer. Interacts (via N-terminus) with host EXOC1 (via C-terminus); this interaction results in EXOC1 degradation through the proteasome degradation pathway. In terms of assembly, forms heterodimers with envelope protein E in the endoplasmic reticulum and Golgi. Homodimer; in the endoplasmic reticulum and Golgi. Interacts with protein prM. Interacts with non-structural protein 1. As to quaternary structure, homodimer; Homohexamer when secreted. Interacts with envelope protein E. Interacts with host PRKAA1. In terms of assembly, interacts (via N-terminus) with serine protease NS3. Forms a heterodimer with serine protease NS3. May form homooligomers. As to quaternary structure, forms a heterodimer with NS2B. Interacts with NS4B. Interacts with unphosphorylated RNA-directed RNA polymerase NS5; this interaction stimulates RNA-directed RNA polymerase NS5 guanylyltransferase activity. Interacts with host SHFL. In terms of assembly, interacts with host MAVS; this interaction inhibits the synthesis of IFN-beta. Interacts with host SHFL. Interacts with host AUP1; the interaction occurs in the presence of Dengue virus NS4B and induces lipophagy which facilitates production of virus progeny particles. May interact with host SRPRA and SEC61G. Interacts with serine protease NS3. As to quaternary structure, homodimer. Interacts with host STAT2; this interaction inhibits the phosphorylation of the latter, and, when all viral proteins are present (polyprotein), targets STAT2 for degradation. Interacts with serine protease NS3. Interacts with host PAF1 complex; the interaction may prevent the recruitment of the PAF1 complex to interferon-responsive genes, and thus reduces the immune response. Specific enzymatic cleavages in vivo yield mature proteins. Cleavages in the lumen of endoplasmic reticulum are performed by host signal peptidase, whereas cleavages in the cytoplasmic side are performed by serine protease NS3. Signal cleavage at the 2K-4B site requires a prior NS3 protease-mediated cleavage at the 4A-2K site. Post-translationally, cleaved in post-Golgi vesicles by a host furin, releasing the mature small envelope protein M, and peptide pr. This cleavage is incomplete as up to 30% of viral particles still carry uncleaved prM. In terms of processing, N-glycosylated. N-glycosylated. The excreted form is glycosylated and this is required for efficient secretion of the protein from infected cells. Post-translationally, acetylated by host KAT5. Acetylation modulates NS3 RNA-binding and unwinding activities and plays an important positive role for viral replication. In terms of processing, sumoylation of RNA-directed RNA polymerase NS5 increases NS5 protein stability allowing proper viral RNA replication. Phosphorylated on serines residues. This phosphorylation may trigger NS5 nuclear localization.

The protein resides in the virion. The protein localises to the host nucleus. It localises to the host cytoplasm. It is found in the host perinuclear region. Its subcellular location is the secreted. The protein resides in the virion membrane. The protein localises to the host endoplasmic reticulum membrane. It localises to the host mitochondrion. The catalysed reaction is Selective hydrolysis of -Xaa-Xaa-|-Yaa- bonds in which each of the Xaa can be either Arg or Lys and Yaa can be either Ser or Ala.. The enzyme catalyses RNA(n) + a ribonucleoside 5'-triphosphate = RNA(n+1) + diphosphate. It catalyses the reaction a ribonucleoside 5'-triphosphate + H2O = a ribonucleoside 5'-diphosphate + phosphate + H(+). It carries out the reaction ATP + H2O = ADP + phosphate + H(+). The catalysed reaction is a 5'-end (5'-triphosphoguanosine)-ribonucleoside in mRNA + S-adenosyl-L-methionine = a 5'-end (N(7)-methyl 5'-triphosphoguanosine)-ribonucleoside in mRNA + S-adenosyl-L-homocysteine. The enzyme catalyses a 5'-end (N(7)-methyl 5'-triphosphoguanosine)-ribonucleoside in mRNA + S-adenosyl-L-methionine = a 5'-end (N(7)-methyl 5'-triphosphoguanosine)-(2'-O-methyl-ribonucleoside) in mRNA + S-adenosyl-L-homocysteine + H(+). In terms of biological role, plays a role in virus budding by binding to the cell membrane and gathering the viral RNA into a nucleocapsid that forms the core of a mature virus particle. During virus entry, may induce genome penetration into the host cytoplasm after hemifusion induced by the surface proteins. Can migrate to the cell nucleus where it modulates host functions. Overcomes the anti-viral effects of host EXOC1 by sequestering and degrading the latter through the proteasome degradation pathway. Inhibits RNA silencing by interfering with host Dicer. Its function is as follows. Prevents premature fusion activity of envelope proteins in trans-Golgi by binding to envelope protein E at pH6.0. After virion release in extracellular space, gets dissociated from E dimers. Functionally, acts as a chaperone for envelope protein E during intracellular virion assembly by masking and inactivating envelope protein E fusion peptide. prM is the only viral peptide matured by host furin in the trans-Golgi network probably to avoid catastrophic activation of the viral fusion activity in acidic Golgi compartment prior to virion release. prM-E cleavage is inefficient, and many virions are only partially matured. These uncleaved prM would play a role in immune evasion. In terms of biological role, may play a role in virus budding. Exerts cytotoxic effects by activating a mitochondrial apoptotic pathway through M ectodomain. May display a viroporin activity. Binds to host cell surface receptor and mediates fusion between viral and cellular membranes. Envelope protein is synthesized in the endoplasmic reticulum in the form of heterodimer with protein prM. They play a role in virion budding in the ER, and the newly formed immature particle is covered with 60 spikes composed of heterodimer between precursor prM and envelope protein E. The virion is transported to the Golgi apparatus where the low pH causes dissociation of PrM-E heterodimers and formation of E homodimers. prM-E cleavage is inefficient, and many virions are only partially matured. These uncleaved prM would play a role in immune evasion. Its function is as follows. Involved in immune evasion, pathogenesis and viral replication. Once cleaved off the polyprotein, is targeted to three destinations: the viral replication cycle, the plasma membrane and the extracellular compartment. Essential for viral replication. Required for formation of the replication complex and recruitment of other non-structural proteins to the ER-derived membrane structures. Excreted as a hexameric lipoparticle that plays a role against host immune response. Antagonizing the complement function. Binds to the host macrophages and dendritic cells. Inhibits signal transduction originating from Toll-like receptor 3 (TLR3). Mediates complement activation, which may contribute to the pathogenesis of the vascular leakage that occurs in severe dengue disease. Activates autophagy through the AMPK/ERK/mTOR signaling pathway. Mechanistically, acts as the assembly platform for STK11-AMPK interactions and promotes STK11-AMPK interactions. In turn, promotes phosphorylation of the AMPK kinase structural domain and activates AMPK, thereby positively regulating the AMPK/ERK/mTOR signaling pathway and inducing autophagy. Functionally, disrupts the host endothelial glycocalyx layer of host pulmonary microvascular endothelial cells, inducing degradation of sialic acid and shedding of heparan sulfate proteoglycans. NS1 induces expression of sialidases, heparanase, and activates cathepsin L, which activates heparanase via enzymatic cleavage. These effects are probably linked to the endothelial hyperpermeability observed in severe dengue disease. In terms of biological role, component of the viral RNA replication complex that functions in virion assembly and antagonizes the host immune response. Required cofactor for the serine protease function of NS3. May have membrane-destabilizing activity and form viroporins. Its function is as follows. Displays three enzymatic activities: serine protease, NTPase and RNA helicase. NS3 serine protease, in association with NS2B, performs its autocleavage and cleaves the polyprotein at dibasic sites in the cytoplasm: C-prM, NS2A-NS2B, NS2B-NS3, NS3-NS4A, NS4A-2K and NS4B-NS5. NS3 RNA helicase binds RNA and unwinds dsRNA in the 3' to 5' direction. Functionally, regulates the ATPase activity of the NS3 helicase activity. NS4A allows NS3 helicase to conserve energy during unwinding. Plays a role in the inhibition of the host innate immune response. Interacts with host MAVS and thereby prevents the interaction between RIGI and MAVS. In turn, IFN-beta production is impaired. Interacts with host AUP1 which mediates induction of lipophagy in host cells and facilitates production of virus progeny particles. In terms of biological role, functions as a signal peptide for NS4B and is required for the interferon antagonism activity of the latter. Induces the formation of ER-derived membrane vesicles where the viral replication takes place. Inhibits interferon (IFN)-induced host STAT1 phosphorylation and nuclear translocation, thereby preventing the establishment of cellular antiviral state by blocking the IFN-alpha/beta pathway. Its function is as follows. Replicates the viral (+) and (-) RNA genome, and performs the capping of genomes in the cytoplasm. NS5 methylates viral RNA cap at guanine N-7 and ribose 2'-O positions. Besides its role in RNA genome replication, also prevents the establishment of cellular antiviral state by blocking the interferon-alpha/beta (IFN-alpha/beta) signaling pathway. Inhibits host TYK2 and STAT2 phosphorylation, thereby preventing activation of JAK-STAT signaling pathway. May reduce immune responses by preventing the recruitment of the host PAF1 complex to interferon-responsive genes. The sequence is that of Genome polyprotein from Aedimorphus (Red guenon).